The sequence spans 498 residues: Glycerol kinase (498 aa).

Thr-12 provides a ligand contact to ADP. Residues Thr-12, Thr-13, and Ser-14 each contribute to the ATP site. Thr-12 is a binding site for sn-glycerol 3-phosphate. Arg-16 contacts ADP. The sn-glycerol 3-phosphate site is built by Arg-82, Glu-83, Tyr-134, and Asp-243. Glycerol is bound by residues Arg-82, Glu-83, Tyr-134, Asp-243, and Gln-244. Positions 265 and 308 each coordinate ADP. Thr-265, Gly-308, Gln-312, and Gly-409 together coordinate ATP. Residues Gly-409 and Asn-413 each contribute to the ADP site.

The protein belongs to the FGGY kinase family. As to quaternary structure, homotetramer and homodimer (in equilibrium).

It carries out the reaction glycerol + ATP = sn-glycerol 3-phosphate + ADP + H(+). Its pathway is polyol metabolism; glycerol degradation via glycerol kinase pathway; sn-glycerol 3-phosphate from glycerol: step 1/1. With respect to regulation, activated by phosphorylation and inhibited by fructose 1,6-bisphosphate (FBP). Key enzyme in the regulation of glycerol uptake and metabolism. Catalyzes the phosphorylation of glycerol to yield sn-glycerol 3-phosphate. This chain is Glycerol kinase, found in Clostridium botulinum (strain Loch Maree / Type A3).